We begin with the raw amino-acid sequence, 68 residues long: Small ribosomal subunit protein bS21 (68 aa).

The protein belongs to the bacterial ribosomal protein bS21 family.

The sequence is that of Small ribosomal subunit protein bS21 from Paracoccus denitrificans (strain Pd 1222).